A 165-amino-acid chain; its full sequence is Lipoprotein signal peptidase (165 aa).

5 helical membrane-spanning segments follow: residues 10–30 (LKWL…KYWV), 42–62 (VLPG…GLFT), 71–91 (LFVW…YKLI), 105–125 (IGGA…VDFI), and 133–153 (HWPT…IVTI). Active-site residues include Asp-123 and Asp-141.

The protein belongs to the peptidase A8 family.

Its subcellular location is the cell inner membrane. It carries out the reaction Release of signal peptides from bacterial membrane prolipoproteins. Hydrolyzes -Xaa-Yaa-Zaa-|-(S,diacylglyceryl)Cys-, in which Xaa is hydrophobic (preferably Leu), and Yaa (Ala or Ser) and Zaa (Gly or Ala) have small, neutral side chains.. The protein operates within protein modification; lipoprotein biosynthesis (signal peptide cleavage). Functionally, this protein specifically catalyzes the removal of signal peptides from prolipoproteins. The protein is Lipoprotein signal peptidase of Blochmanniella pennsylvanica (strain BPEN).